Consider the following 211-residue polypeptide: Thiamine-phosphate synthase (211 aa).

4-amino-2-methyl-5-(diphosphooxymethyl)pyrimidine contacts are provided by residues 37–41 and Asn-69; that span reads QLRIK. Mg(2+) is bound by residues Asp-70 and Asp-89. Ser-108 serves as a coordination point for 4-amino-2-methyl-5-(diphosphooxymethyl)pyrimidine. 134–136 contacts 2-[(2R,5Z)-2-carboxy-4-methylthiazol-5(2H)-ylidene]ethyl phosphate; sequence TQT. Residue Lys-137 coordinates 4-amino-2-methyl-5-(diphosphooxymethyl)pyrimidine. 2-[(2R,5Z)-2-carboxy-4-methylthiazol-5(2H)-ylidene]ethyl phosphate-binding positions include Gly-166 and 186 to 187; that span reads VS.

Belongs to the thiamine-phosphate synthase family. The cofactor is Mg(2+).

It catalyses the reaction 2-[(2R,5Z)-2-carboxy-4-methylthiazol-5(2H)-ylidene]ethyl phosphate + 4-amino-2-methyl-5-(diphosphooxymethyl)pyrimidine + 2 H(+) = thiamine phosphate + CO2 + diphosphate. The catalysed reaction is 2-(2-carboxy-4-methylthiazol-5-yl)ethyl phosphate + 4-amino-2-methyl-5-(diphosphooxymethyl)pyrimidine + 2 H(+) = thiamine phosphate + CO2 + diphosphate. The enzyme catalyses 4-methyl-5-(2-phosphooxyethyl)-thiazole + 4-amino-2-methyl-5-(diphosphooxymethyl)pyrimidine + H(+) = thiamine phosphate + diphosphate. It functions in the pathway cofactor biosynthesis; thiamine diphosphate biosynthesis; thiamine phosphate from 4-amino-2-methyl-5-diphosphomethylpyrimidine and 4-methyl-5-(2-phosphoethyl)-thiazole: step 1/1. Condenses 4-methyl-5-(beta-hydroxyethyl)thiazole monophosphate (THZ-P) and 2-methyl-4-amino-5-hydroxymethyl pyrimidine pyrophosphate (HMP-PP) to form thiamine monophosphate (TMP). The chain is Thiamine-phosphate synthase from Salmonella paratyphi A (strain ATCC 9150 / SARB42).